The primary structure comprises 442 residues: MTQSGQAESETPSTLIHCVRDRQQAKRELERLANRSTGNSQKQAMATVEDILDTVRSQGDQALITLTERFDGFRPEPLTVAPEELEDAWRKTPQKLQSALELAYRRIQDFHQHQRPNDLMVQGIHGEQLGRRWRPVQKAGIYIPGGRAAYPSTVLMNAVPAQVAGVEQLVMTSPAGRDGQINRTVLAAAHLAGIREVLRLGGAQAIAALAFGTETVPKVDVISGPGNLYVTLAKKAVYGQVGIDSLAGPSEVLVIADQSARVEQVAADLLAQSEHDPLAAAVLLTTEASLAEQLPSHLEAQLKGHPREQICRASLSNWGLVVICESLERCAQLSDHFAPEHLELLVEHPHAIADCIKNAGAIFIGPWTPEAVGDYLAGPNHTLPTCGTARFSGALSVETFLRHTSLIEFNRSALEATANAVRELASSEGLHSHAESVRIRFE.

Tyr-142, Gln-204, and Asn-227 together coordinate NAD(+). Substrate-binding residues include Ser-250, Gln-272, and His-275. The Zn(2+) site is built by Gln-272 and His-275. Catalysis depends on proton acceptor residues Glu-340 and His-341. 4 residues coordinate substrate: His-341, Asp-374, Glu-428, and His-433. Position 374 (Asp-374) interacts with Zn(2+). Residue His-433 coordinates Zn(2+).

Belongs to the histidinol dehydrogenase family. Zn(2+) is required as a cofactor.

The enzyme catalyses L-histidinol + 2 NAD(+) + H2O = L-histidine + 2 NADH + 3 H(+). It participates in amino-acid biosynthesis; L-histidine biosynthesis; L-histidine from 5-phospho-alpha-D-ribose 1-diphosphate: step 9/9. Functionally, catalyzes the sequential NAD-dependent oxidations of L-histidinol to L-histidinaldehyde and then to L-histidine. The sequence is that of Histidinol dehydrogenase from Prochlorococcus marinus (strain MIT 9313).